Here is a 351-residue protein sequence, read N- to C-terminus: MRKIIHVDMDCFFAAVEMRDNPALRDIPIAIGGSRECRGVISTANYPARQFGVRSAMPTAMALKLCPHLTLLPGRFDAYKEASRHVRDIFSRYTSLIEPLSLDEAWLDVTDTPHCYGSATLIAREIRQTIFNELQLTASAGVAPVKFLAKIASDLNKPNGQYVITPADVPDFLKTLPLAKIPGVGKVSAAKLESMGLITCGDIQQCDLAMLLKRFGKFGRVLWERSQGIDERDVNSERLRKSVGVERTLAEDIHEWSDCEAIIERLYPELERRLATVKPDLLIARQGVKLKFNDFQQTTQEHVWPQLNKEDLISTARKTWNERRGDRGVRLVGLHVTLLHPQLERQLVLGL.

Residues 4 to 185 (IIHVDMDCFF…LPLAKIPGVG (182 aa)) form the UmuC domain. 2 residues coordinate Mg(2+): Asp-8 and Asp-103. Glu-104 is an active-site residue.

It belongs to the DNA polymerase type-Y family. As to quaternary structure, monomer. Mg(2+) serves as cofactor.

The protein localises to the cytoplasm. The enzyme catalyses DNA(n) + a 2'-deoxyribonucleoside 5'-triphosphate = DNA(n+1) + diphosphate. Poorly processive, error-prone DNA polymerase involved in untargeted mutagenesis. Copies undamaged DNA at stalled replication forks, which arise in vivo from mismatched or misaligned primer ends. These misaligned primers can be extended by PolIV. Exhibits no 3'-5' exonuclease (proofreading) activity. May be involved in translesional synthesis, in conjunction with the beta clamp from PolIII. The polypeptide is DNA polymerase IV (Salmonella arizonae (strain ATCC BAA-731 / CDC346-86 / RSK2980)).